A 51-amino-acid polypeptide reads, in one-letter code: Insulin (51 aa).

3 disulfides stabilise this stretch: C7/C37, C19/C50, and C36/C41.

It belongs to the insulin family. Heterodimer of a B chain and an A chain linked by two disulfide bonds.

The protein localises to the secreted. Its function is as follows. Insulin decreases blood glucose concentration. It increases cell permeability to monosaccharides, amino acids and fatty acids. It accelerates glycolysis, the pentose phosphate cycle, and glycogen synthesis in liver. This is Insulin (INS) from Elephas maximus (Indian elephant).